The following is a 264-amino-acid chain: Somatomedin-B and thrombospondin type-1 domain-containing protein (264 aa).

A signal peptide spans 1-20 (MKTLWMVLCALARLWPGALA). Residues 24 to 75 (EAGRCCPGRDPACFARGWRLDRVYGTCFCDQACRLTGDCCFDYDRACPARPC) enclose the SMB domain. Intrachain disulfides connect cysteine 28–cysteine 36, cysteine 28–cysteine 52, cysteine 36–cysteine 70, cysteine 50–cysteine 52, cysteine 50–cysteine 63, cysteine 56–cysteine 62, and cysteine 63–cysteine 70. In terms of domain architecture, TSP type-1 spans 74-125 (PCFVGEWSPWSGCAGQCQPTTRVRRRSVRQEPLNGGAPCPPLEERAGCLEYS). The N-linked (GlcNAc...) asparagine glycan is linked to asparagine 227.

Belongs to the thrombospondin family.

It is found in the secreted. The protein localises to the extracellular space. The protein resides in the extracellular matrix. This Mus musculus (Mouse) protein is Somatomedin-B and thrombospondin type-1 domain-containing protein (Sbspon).